Reading from the N-terminus, the 513-residue chain is Maturase K (513 aa).

This sequence belongs to the intron maturase 2 family. MatK subfamily.

It localises to the plastid. It is found in the chloroplast. Its function is as follows. Usually encoded in the trnK tRNA gene intron. Probably assists in splicing its own and other chloroplast group II introns. The chain is Maturase K from Eleusine indica (Goosegrass).